We begin with the raw amino-acid sequence, 872 residues long: Probable LRR receptor-like serine/threonine-protein kinase At1g51880 (872 aa).

Positions 1–23 are cleaved as a signal peptide; that stretch reads MKSIHGFLLFLITAYVILESVQA. Topologically, residues 24–513 are extracellular; that stretch reads QDQLGFISLD…GKSKKVPMIP (490 aa). N-linked (GlcNAc...) asparagine glycosylation is found at N40, N49, N96, N181, N255, N268, N294, N339, and N401. 3 LRR repeats span residues 411 to 434, 435 to 457, and 459 to 482; these read RIIS…SKLT, QLIE…FADM, and LLKL…IQQR. N-linked (GlcNAc...) asparagine glycans are attached at residues N464 and N472. The helical transmembrane segment at 514 to 534 threads the bilayer; sequence IVASVAGVFALLVILAIFFVV. The Cytoplasmic portion of the chain corresponds to 535 to 872; that stretch reads RRKNGESNKG…SASEFSPGAR (338 aa). Position 557 is a phosphothreonine (T557). The 273-residue stretch at 566 to 838 folds into the Protein kinase domain; that stretch reads NNFERVLGKG…HVVTELNECV (273 aa). Residues 572–580 and K593 contribute to the ATP site; that span reads LGKGGFGTV. Phosphotyrosine is present on Y638. D690 functions as the Proton acceptor in the catalytic mechanism. S724 carries the post-translational modification Phosphoserine. Residues T725 and T730 each carry the phosphothreonine modification. Y738 carries the post-translational modification Phosphotyrosine.

Belongs to the protein kinase superfamily. Ser/Thr protein kinase family.

The protein resides in the membrane. The enzyme catalyses L-seryl-[protein] + ATP = O-phospho-L-seryl-[protein] + ADP + H(+). It catalyses the reaction L-threonyl-[protein] + ATP = O-phospho-L-threonyl-[protein] + ADP + H(+). The protein is Probable LRR receptor-like serine/threonine-protein kinase At1g51880 of Arabidopsis thaliana (Mouse-ear cress).